A 405-amino-acid polypeptide reads, in one-letter code: Argininosuccinate synthase (405 aa).

ATP-binding positions include 10–18 (AYSGGLDTS) and Ala37. 2 residues coordinate L-citrulline: Tyr88 and Ser93. Gly118 provides a ligand contact to ATP. The L-aspartate site is built by Thr120, Asn124, and Asp125. Residue Asn124 participates in L-citrulline binding. 5 residues coordinate L-citrulline: Arg128, Ser179, Ser188, Glu264, and Tyr276.

It belongs to the argininosuccinate synthase family. Type 1 subfamily. As to quaternary structure, homotetramer.

The protein resides in the cytoplasm. It catalyses the reaction L-citrulline + L-aspartate + ATP = 2-(N(omega)-L-arginino)succinate + AMP + diphosphate + H(+). The protein operates within amino-acid biosynthesis; L-arginine biosynthesis; L-arginine from L-ornithine and carbamoyl phosphate: step 2/3. The protein is Argininosuccinate synthase of Pseudomonas putida (strain GB-1).